Reading from the N-terminus, the 266-residue chain is BTB/POZ domain-containing protein KCTD2 (266 aa).

Ala-2 carries the N-acetylalanine modification. The disordered stretch occupies residues 38–79; the sequence is GRHPADTAASPPPPRTAGARARTSGADGRRRGRPLGPAQRGR. Residues 53-63 show a composition bias toward low complexity; that stretch reads TAGARARTSGA. The 99-residue stretch at 76 to 174 folds into the BTB domain; that stretch reads QRGRYLLRDT…LVKERIRDNE (99 aa).

This Mus musculus (Mouse) protein is BTB/POZ domain-containing protein KCTD2 (Kctd2).